Reading from the N-terminus, the 980-residue chain is LRR receptor-like serine/threonine-protein kinase SIK1 (980 aa).

The N-terminal stretch at 1-24 is a signal peptide; that stretch reads MAAARAPWLWWWVVVVVGVAVAEA. The Extracellular segment spans residues 25–588; that stretch reads ASGGGGGGDG…HGQRVNISKT (564 aa). N-linked (GlcNAc...) asparagine glycosylation is found at asparagine 72 and asparagine 81. 20 LRR repeats span residues 75–98, 99–122, 124–146, 147–170, 171–194, 196–218, 219–242, 243–265, 266–289, 290–312, 314–337, 338–361, 362–385, 387–408, 409–433, 435–457, 458–480, 481–505, 507–529, and 531–554; these read FAVLALNLSNLNLGGEISPAIGEL, KNLQFVDLKGNKLTGQIPDEIGDC, SLKYLDLSGNLLYGDIPFSISKL, KQLEELILKNNQLTGPIPSTLSQI, PNLKTLDLAQNQLTGDIPRLIYWN, VLQYLGLRGNSLTGTLSPDMCQL, TGLWYFDVRGNNLTGTIPESIGNC, TSFEILDISYNQISGEIPYNIGF, LQVATLSLQGNRLTGKIPDVIGLM, QALAVLDLSENELVGPIPSILGN, SYTGKLYLHGNKLTGVIPPELGNM, SKLSYLQLNDNELVGTIPAELGKL, EELFELNLANNNLQGPIPANISSC, ALNKFNVYGNKLNGSIPAGFQK, LESLTYLNLSSNNFKGNIPSELGHI, NLDTLDLSYNEFSGPVPATIGDL, EHLLELNLSKNHLDGPVPAEFGN, LRSVQVIDMSNNNLSGSLPEELGQL, NLDSLILNNNNLVGEIPAQLANC, and SLNNLNLSYNNLSGHVPMAKNFSK. N-linked (GlcNAc...) asparagine glycans are attached at residues asparagine 230 and asparagine 241. 2 N-linked (GlcNAc...) asparagine glycosylation sites follow: asparagine 312 and asparagine 336. Residues asparagine 381, asparagine 399, and asparagine 416 are each glycosylated (N-linked (GlcNAc...) asparagine). N-linked (GlcNAc...) asparagine glycans are attached at residues asparagine 464 and asparagine 493. Asparagine 536, asparagine 541, asparagine 551, and asparagine 584 each carry an N-linked (GlcNAc...) asparagine glycan. A helical membrane pass occupies residues 589-609; it reads AIACIILGFIILLCVLLLAIY. Residues 610-980 are Cytoplasmic-facing; the sequence is KTNQPQPLVK…FGEVISKHTM (371 aa). The Protein kinase domain occupies 653 to 923; sequence LSEKYIIGYG…EVARVLLSLL (271 aa). ATP is bound by residues 659 to 667 and lysine 681; that span reads IGYGASSTV. Catalysis depends on aspartate 778, which acts as the Proton acceptor.

It belongs to the protein kinase superfamily. Ser/Thr protein kinase family. Post-translationally, autophosphorylated. In terms of tissue distribution, expressed in nodes, vascular bundles of stems, and anthers.

It localises to the cell membrane. The enzyme catalyses L-seryl-[protein] + ATP = O-phospho-L-seryl-[protein] + ADP + H(+). The catalysed reaction is L-threonyl-[protein] + ATP = O-phospho-L-threonyl-[protein] + ADP + H(+). Receptor kinase involved in salt drought stress responses. Acts as a positive regulator of salt and drought tolerance. May promote salt and drought tolerance through the induction of the activities of antioxidative enzymes, such as peroxidase, superoxide dismutase and catalase. May be involved in the control of stomatal development in leaf epidermis. Possesses kinase activity in vitro. Does not seem to be involved in heat tolerance. The chain is LRR receptor-like serine/threonine-protein kinase SIK1 from Oryza sativa subsp. japonica (Rice).